A 338-amino-acid polypeptide reads, in one-letter code: Malate dehydrogenase, mitochondrial (338 aa).

A mitochondrion-targeting transit peptide spans 1-24 (MLSALARPVGAALRRSFSTSAQNN). NAD(+)-binding positions include 31–37 (GASGGIG) and Asp57. An O-linked (GlcNAc) serine glycan is attached at Ser33. Residues Lys78 and Lys91 each carry the N6-acetyllysine; alternate modification. Lys78 and Lys91 each carry N6-succinyllysine; alternate. Positions 104 and 110 each coordinate substrate. Residues Asn117 and 140–142 (ISN) contribute to the NAD(+) site. Substrate is bound at residue Asn142. Lys165 is modified (N6-acetyllysine). Residue Arg176 participates in substrate binding. Lys185 bears the N6-acetyllysine; alternate mark. Lys185 carries the post-translational modification N6-succinyllysine; alternate. Catalysis depends on His200, which acts as the Proton acceptor. Residue Lys203 is modified to N6-succinyllysine. Lys215 and Lys239 each carry N6-acetyllysine; alternate. N6-succinyllysine; alternate occurs at positions 215 and 239. Lys239 carries the post-translational modification N6-malonyllysine; alternate. Ser246 is modified (phosphoserine). Residue Met251 coordinates NAD(+). Lys269 is subject to N6-succinyllysine. N6-acetyllysine; alternate occurs at positions 296, 301, 307, 314, and 324. Lys296, Lys301, Lys307, Lys314, and Lys324 each carry N6-succinyllysine; alternate. Lys307 carries the post-translational modification N6-malonyllysine; alternate. Ser326 carries the phosphoserine modification. 3 positions are modified to N6-acetyllysine; alternate: Lys328, Lys329, and Lys335. Lys328 is modified (N6-succinyllysine; alternate). Residue Lys329 is modified to N6-malonyllysine; alternate. Lys335 carries the post-translational modification N6-succinyllysine; alternate.

It belongs to the LDH/MDH superfamily. MDH type 1 family. As to quaternary structure, homodimer. Acetylation is enhanced after treatment either with trichostin A (TCA) or with nicotinamide (NAM) with the appearance of tri- and tetraacetylations. Glucose also increases acetylation. Expressed in flagella of epididymal sperm.

It is found in the mitochondrion matrix. It carries out the reaction (S)-malate + NAD(+) = oxaloacetate + NADH + H(+). Enzyme activity is enhanced by acetylation. This chain is Malate dehydrogenase, mitochondrial (Mdh2), found in Rattus norvegicus (Rat).